The primary structure comprises 476 residues: Glutamate--tRNA ligase 1 (476 aa).

Residues 9–19 carry the 'HIGH' region motif; sequence PSPTGFLHIGG. The 'KMSKS' region motif lies at 238-242; it reads KLSKR. Residue Lys-241 participates in ATP binding.

The protein belongs to the class-I aminoacyl-tRNA synthetase family. Glutamate--tRNA ligase type 1 subfamily. Monomer.

It is found in the cytoplasm. The enzyme catalyses tRNA(Glu) + L-glutamate + ATP = L-glutamyl-tRNA(Glu) + AMP + diphosphate. Functionally, catalyzes the attachment of glutamate to tRNA(Glu) in a two-step reaction: glutamate is first activated by ATP to form Glu-AMP and then transferred to the acceptor end of tRNA(Glu). This Bartonella bacilliformis (strain ATCC 35685 / KC583 / Herrer 020/F12,63) protein is Glutamate--tRNA ligase 1.